The sequence spans 208 residues: MAKYTGPSCRLCRREGGKLFLKGEKCFSDKCPVSIRAYAPGQHGQRRGRVSEYGGQLREKQKIRRIYGVLEGQFRRYFQRASQARGVTGELLLRFLELRLDNVAYRLGFGASRAEARQVVRHGHILVNGRRVDIPSYQVRAGDVVSVAEAARTHIRIAASVEATAGRGFPEWVSMDTTELKATIKAVPVREDMAPDLNEQVVVELYSK.

An S4 RNA-binding domain is found at 98–159 (LRLDNVAYRL…AARTHIRIAA (62 aa)).

It belongs to the universal ribosomal protein uS4 family. Part of the 30S ribosomal subunit. Contacts protein S5. The interaction surface between S4 and S5 is involved in control of translational fidelity.

Functionally, one of the primary rRNA binding proteins, it binds directly to 16S rRNA where it nucleates assembly of the body of the 30S subunit. In terms of biological role, with S5 and S12 plays an important role in translational accuracy. The polypeptide is Small ribosomal subunit protein uS4 (Acidithiobacillus ferrooxidans (strain ATCC 23270 / DSM 14882 / CIP 104768 / NCIMB 8455) (Ferrobacillus ferrooxidans (strain ATCC 23270))).